Consider the following 872-residue polypeptide: MKELSSAQIRQMWLDFWKSKGHSVEPSANLVPVNDPTLLWINSGVATLKKYFDGSVIPENPRITNAQKSIRTNDIENVGKTARHHTMFEMLGNFSIGDYFRDEAIEWGFELLTSPEWFDFPKDKLYMTYYPDDKDSYNRWIACGVEPSHLVPIEDNFWEIGAGPSGPDTEIFFDRGEDFDPENIGLRLLAEDIENDRYIEIWNIVLSQFNADPAVPRSEYKELPNKNIDTGAGLERLAAVMQGAKTNFETDLFMPIIREVEKLSGKTYDPDGDNMSFKVIADHIRALSFAIGDGALPGNEGRGYVLRRLLRRAVMHGRRLGINETFLYKLVPTVGQIMESYYPEVLEKRDFIEKIVKREEETFARTIDAGSGHLDSLLAQLKAEGKDTLEGKDIFKLYDTYGFPVELTEELAEDADYKIDHEGFKAAMKEQQDRARAAVVKGGSMGMQNETLAGIVEESRFDYGADSLESNLSVIIADNERTEAVSEGQALLVFAQTPFYAEMGGQVADHGVIKNDKGDTVAEVVDVQKAPNGQPLHTVNVLASLSVGTNYTLEINKERRLAVEKNHTATHLLHAALHNVIGEHATQAGSLNEEEFLRFDFTHFEAVSNEELRHIEQEVNEQIWNDLTITTTETDVETAKEMGAMALFGEKYGKVVRVVQIGNYSVELCGGTHLNNSSEIGLFKIVKEEGIGSGTRRIIAVTGRQAFEAYRNQEDALKEIAATVKAPQLKDAAAKVQALSDSLRDLQKENVELKEKAAAAAAGDVFKDIQEAKGVRFIASQVDVADAGALRTFADNWKQKDYSDVLVLVAAIGEKVNVLVASKTKDVHAGNMIKGLAPIVAGRGGGKPDMAMAGGSDASKIAELLAAVAENL.

His567, His571, Cys669, and His673 together coordinate Zn(2+).

Belongs to the class-II aminoacyl-tRNA synthetase family. Zn(2+) serves as cofactor.

It localises to the cytoplasm. The catalysed reaction is tRNA(Ala) + L-alanine + ATP = L-alanyl-tRNA(Ala) + AMP + diphosphate. Catalyzes the attachment of alanine to tRNA(Ala) in a two-step reaction: alanine is first activated by ATP to form Ala-AMP and then transferred to the acceptor end of tRNA(Ala). Also edits incorrectly charged Ser-tRNA(Ala) and Gly-tRNA(Ala) via its editing domain. This is Alanine--tRNA ligase from Streptococcus agalactiae serotype Ia (strain ATCC 27591 / A909 / CDC SS700).